The following is a 475-amino-acid chain: MLPPGRNRTAQPARLGLQRQLAQVDAPAGSATPLGPAQVVTAGLLTLLIVWTLLGNVLVCAAIVRSRHLRAKMTNIFIVSLAVSDLFVALLVMPWKAVAEVAGYWPFGTFCDIWVAFDIMCSTASILNLCIISVDRYWAISRPFRYERKMTQRVALVMVGLAWTLSILISFIPVQLNWHRDKAGSQGQEGLLSNGTPWEEGWELEGRTENCDSSLNRTYAISSSLISFYIPVAIMIVTYTRIYRIAQVQIRRISSLERAAEHAQSCRSRGAYEPDPSLRASIKKETKVFKTLSMIMGVFVCCWLPFFILNCMVPFCSSGDAEGPKTGFPCVSETTFDIFVWFGWANSSLNPIIYAFNADFRKVFAQLLGCSHFCFRTPVQTVNISNELISYNQDTVFHKEIATAYVHMIPNAVSSGDREVGEEEEEGPFDHMSQISPTTPDGDLAAESVWELDCEEEVSLGKISPLTPNCFDKTA.

The Extracellular portion of the chain corresponds to 1-38; sequence MLPPGRNRTAQPARLGLQRQLAQVDAPAGSATPLGPAQ. Residue asparagine 7 is glycosylated (N-linked (GlcNAc...) asparagine). A helical membrane pass occupies residues 39 to 64; that stretch reads VVTAGLLTLLIVWTLLGNVLVCAAIV. The Cytoplasmic segment spans residues 65-75; the sequence is RSRHLRAKMTN. A helical transmembrane segment spans residues 76-102; sequence IFIVSLAVSDLFVALLVMPWKAVAEVA. The Extracellular segment spans residues 103 to 111; the sequence is GYWPFGTFC. A disulfide bridge links cysteine 111 with cysteine 211. The chain crosses the membrane as a helical span at residues 112 to 134; it reads DIWVAFDIMCSTASILNLCIISV. Residues 135–153 are Cytoplasmic-facing; it reads DRYWAISRPFRYERKMTQR. The chain crosses the membrane as a helical span at residues 154–179; sequence VALVMVGLAWTLSILISFIPVQLNWH. Topologically, residues 180 to 215 are extracellular; it reads RDKAGSQGQEGLLSNGTPWEEGWELEGRTENCDSSL. The helical transmembrane segment at 216 to 240 threads the bilayer; sequence NRTYAISSSLISFYIPVAIMIVTYT. Over 241–289 the chain is Cytoplasmic; that stretch reads RIYRIAQVQIRRISSLERAAEHAQSCRSRGAYEPDPSLRASIKKETKVF. Residues 290–317 form a helical membrane-spanning segment; it reads KTLSMIMGVFVCCWLPFFILNCMVPFCS. Residues 318-335 are Extracellular-facing; it reads SGDAEGPKTGFPCVSETT. The helical transmembrane segment at 336 to 357 threads the bilayer; the sequence is FDIFVWFGWANSSLNPIIYAFN. Over 358 to 475 the chain is Cytoplasmic; that stretch reads ADFRKVFAQL…LTPNCFDKTA (118 aa). The S-palmitoyl cysteine moiety is linked to residue cysteine 370. The disordered stretch occupies residues 415–443; sequence SGDREVGEEEEEGPFDHMSQISPTTPDGD.

It belongs to the G-protein coupled receptor 1 family. As to expression, brain, in the lateral mammillary nuclei, the anterior pretectal nuclei, and several layers of the hippocampus.

Its subcellular location is the cell membrane. In terms of biological role, dopamine receptor whose activity is mediated by G proteins which activate adenylyl cyclase. This is D(1B) dopamine receptor (Drd5) from Rattus norvegicus (Rat).